Here is a 222-residue protein sequence, read N- to C-terminus: Small ribosomal subunit protein uS3 (222 aa).

The KH type-2 domain maps to 39–107 (IRKYIKTKFY…QININIAEIK (69 aa)).

This sequence belongs to the universal ribosomal protein uS3 family. As to quaternary structure, part of the 30S ribosomal subunit. Forms a tight complex with proteins S10 and S14.

Binds the lower part of the 30S subunit head. Binds mRNA in the 70S ribosome, positioning it for translation. The protein is Small ribosomal subunit protein uS3 of Carboxydothermus hydrogenoformans (strain ATCC BAA-161 / DSM 6008 / Z-2901).